The chain runs to 331 residues: Ketol-acid reductoisomerase (NADP(+)) (331 aa).

In terms of domain architecture, KARI N-terminal Rossmann spans 2–182; it reads ARMYYDEDAN…GGTRAGVLET (181 aa). NADP(+) contacts are provided by residues 25–28, S51, S53, and 83–86; these read YGSQ and DEVQ. Residue H108 is part of the active site. G134 is an NADP(+) binding site. The 146-residue stretch at 183-328 folds into the KARI C-terminal knotted domain; the sequence is TFREETETDL…KDLRAMFSWL (146 aa). Residues D191, E195, E227, and E231 each coordinate Mg(2+). S252 lines the substrate pocket.

This sequence belongs to the ketol-acid reductoisomerase family. It depends on Mg(2+) as a cofactor.

The enzyme catalyses (2R)-2,3-dihydroxy-3-methylbutanoate + NADP(+) = (2S)-2-acetolactate + NADPH + H(+). It catalyses the reaction (2R,3R)-2,3-dihydroxy-3-methylpentanoate + NADP(+) = (S)-2-ethyl-2-hydroxy-3-oxobutanoate + NADPH + H(+). The protein operates within amino-acid biosynthesis; L-isoleucine biosynthesis; L-isoleucine from 2-oxobutanoate: step 2/4. It functions in the pathway amino-acid biosynthesis; L-valine biosynthesis; L-valine from pyruvate: step 2/4. In terms of biological role, involved in the biosynthesis of branched-chain amino acids (BCAA). Catalyzes an alkyl-migration followed by a ketol-acid reduction of (S)-2-acetolactate (S2AL) to yield (R)-2,3-dihydroxy-isovalerate. In the isomerase reaction, S2AL is rearranged via a Mg-dependent methyl migration to produce 3-hydroxy-3-methyl-2-ketobutyrate (HMKB). In the reductase reaction, this 2-ketoacid undergoes a metal-dependent reduction by NADPH to yield (R)-2,3-dihydroxy-isovalerate. This Nostoc punctiforme (strain ATCC 29133 / PCC 73102) protein is Ketol-acid reductoisomerase (NADP(+)).